We begin with the raw amino-acid sequence, 189 residues long: Elongation factor P (189 aa).

This sequence belongs to the elongation factor P family.

It is found in the cytoplasm. The protein operates within protein biosynthesis; polypeptide chain elongation. Involved in peptide bond synthesis. Stimulates efficient translation and peptide-bond synthesis on native or reconstituted 70S ribosomes in vitro. Probably functions indirectly by altering the affinity of the ribosome for aminoacyl-tRNA, thus increasing their reactivity as acceptors for peptidyl transferase. This Phytoplasma australiense protein is Elongation factor P.